Consider the following 176-residue polypeptide: Ribosome maturation factor RimM (176 aa).

In terms of domain architecture, PRC barrel spans 100–173 (PEEYYDYQLI…RLRIDPPPGL (74 aa)).

It belongs to the RimM family. Binds ribosomal protein uS19.

Its subcellular location is the cytoplasm. Functionally, an accessory protein needed during the final step in the assembly of 30S ribosomal subunit, possibly for assembly of the head region. Essential for efficient processing of 16S rRNA. May be needed both before and after RbfA during the maturation of 16S rRNA. It has affinity for free ribosomal 30S subunits but not for 70S ribosomes. This chain is Ribosome maturation factor RimM, found in Acidothermus cellulolyticus (strain ATCC 43068 / DSM 8971 / 11B).